Here is a 3177-residue protein sequence, read N- to C-terminus: Proliferation marker protein Ki-67 (3177 aa).

Residues 27-76 enclose the FHA domain; it reads CLFGRSIECDIRIQLPVVSKRHCKIEVKEQEAILYNFSSTNPTQVNGVTI. Basic and acidic residues-rich tracts occupy residues 98-107 and 116-126; these read EDGNHEDGSK and LGKEPSRRASR. Disordered regions lie at residues 98–442 and 473–572; these read EDGN…PGLS and RPEL…ASIS. A phosphoserine mark is found at Ser-125, Ser-128, and Ser-162. Polar residues-rich tracts occupy residues 165 to 177 and 202 to 221; these read SDGS…QDSS and STGS…LSNS. Residues 235–263 show a composition bias toward basic and acidic residues; it reads MKEELDVKSQKSCRKSEPQPDRAAEESRE. A Glycyl lysine isopeptide (Lys-Gly) (interchain with G-Cter in SUMO2) cross-link involves residue Lys-236. 5 positions are modified to phosphoserine: Ser-250, Ser-276, Ser-277, Ser-286, and Ser-287. The segment covering 276–286 has biased composition (polar residues); it reads SSGSTPVTAAS. Phosphothreonine is present on residues Thr-307 and Thr-316. Phosphoserine occurs at positions 321, 337, 373, 498, 503, and 588. The tract at residues 455–618 is positively charged patch (CP); the sequence is KSEGMPMKRR…VKQTQTKVAK (164 aa). The 48-residue stretch at 462–509 folds into the PP1-binding domain; the sequence is KRRRVSFGGHLRPELFDENLPPNTPLKRGETPTKRKSLGTHSPAVLKT. The tract at residues 614-652 is disordered; sequence TKVAKHVPQKQTSKRQRRPSTPKKPTSNLHNQFTTGHAN. The span at 616–634 shows a compositional bias: basic residues; sequence VAKHVPQKQTSKRQRRPST. Over residues 636 to 652 the composition is skewed to polar residues; that stretch reads KKPTSNLHNQFTTGHAN. Thr-701 carries the post-translational modification Phosphothreonine. Disordered regions lie at residues 793-815, 835-901, and 956-989; these read LEKK…SKLR, VLAE…LGSQ, and KHSP…DKPI. Positions 855-864 are enriched in polar residues; the sequence is DQQVQDNENA. Composition is skewed to basic and acidic residues over residues 867–882 and 975–989; these read RCKE…EKTS and LKEH…DKPI. 16 K167R repeats span residues 994-1101, 1108-1216, 1228-1336, 1348-1450, 1461-1569, 1582-1684, 1696-1806, 1817-1925, 1937-2046, 2059-2163, 2175-2284, 2296-2405, 2419-2526, 2537-2639, 2643-2748, and 2762-2870; these read TRVL…FISP, KKIP…FQTP, SAKI…FQTP, SAKM…FQIP, KTKK…FQMP, TMLA…LFQT, KQTR…FQTP, ETTK…FQTP, VKMS…FQTP, SAKM…FQTP, SAKI…VFQT, AKLP…CQAP, KTPK…SFQE, KRIS…PIQT, and TQMP…ITQI. Residues Lys-1013 and Lys-1026 each participate in a glycyl lysine isopeptide (Lys-Gly) (interchain with G-Cter in SUMO2) cross-link. Ser-1062 bears the Phosphoserine mark. A Glycyl lysine isopeptide (Lys-Gly) (interchain with G-Cter in SUMO1); alternate cross-link involves residue Lys-1082. A Glycyl lysine isopeptide (Lys-Gly) (interchain with G-Cter in SUMO2); alternate cross-link involves residue Lys-1082. Disordered stretches follow at residues 1109–1321 and 1334–1410; these read KIPS…IRAQ and QTPA…ENDC. The residue at position 1114 (Ser-1114) is a Phosphoserine. A compositionally biased stretch (polar residues) spans 1114–1127; it reads SPHTQPVRTPASTK. Thr-1122 carries the phosphothreonine modification. Phosphoserine is present on Ser-1125. Thr-1150 is modified (phosphothreonine). Position 1152 is a phosphoserine (Ser-1152). Phosphothreonine occurs at positions 1159 and 1175. A Phosphoserine modification is found at Ser-1189. Thr-1215 carries the phosphothreonine modification. Ser-1235 is modified (phosphoserine). A phosphothreonine mark is found at Thr-1243, Thr-1279, Thr-1295, Thr-1307, and Thr-1315. The span at 1308–1317 shows a compositional bias: basic residues; sequence GHKRRPRTPK. Lys-1317 is covalently cross-linked (Glycyl lysine isopeptide (Lys-Gly) (interchain with G-Cter in SUMO2)). At Thr-1335 the chain carries Phosphothreonine. Over residues 1353-1368 the composition is skewed to polar residues; it reads LESSQAEPVKTPASTK. Ser-1356 bears the Phosphoserine mark. The residue at position 1363 (Thr-1363) is a Phosphothreonine. Residue Ser-1366 is modified to Phosphoserine. A compositionally biased stretch (basic and acidic residues) spans 1371-1384; it reads SKTDLSKVDVREDP. Residues Thr-1400 and Thr-1416 each carry the phosphothreonine modification. Ser-1469 bears the Phosphoserine mark. Residue Thr-1477 is modified to Phosphothreonine. Ser-1480 bears the Phosphoserine mark. Thr-1513 is modified (phosphothreonine). The disordered stretch occupies residues 1526-1550; sequence RKPAKRKLDSTAGMPNSKRMRCSSK. Phosphoserine is present on residues Ser-1542 and Ser-1587. Lys-1609 is subject to N6-acetyllysine. Residue Lys-1668 forms a Glycyl lysine isopeptide (Lys-Gly) (interchain with G-Cter in SUMO2) linkage. Phosphothreonine occurs at positions 1684 and 1712. Ser-1734 carries the post-translational modification Phosphoserine. The segment at 1749–1797 is disordered; the sequence is IPIGPEDDTENKGVKESTPQTLDSSASRTVSKRQQGAHEERPQFSGDLF. Residues 1765–1782 show a composition bias toward polar residues; the sequence is STPQTLDSSASRTVSKRQ. Thr-1766 is subject to Phosphothreonine. Ser-1779 carries the phosphoserine modification. Thr-1805 is subject to Phosphothreonine. Ser-1825 is modified (phosphoserine). Phosphothreonine is present on residues Thr-1859, Thr-1868, Thr-1884, and Thr-1924. Residues 1925 to 2033 are disordered; sequence PAGASDPVSV…QTPKIRAQPL (109 aa). Residue Ser-1944 is modified to Phosphoserine. At Lys-1966 the chain carries N6-acetyllysine. Thr-1989, Thr-2005, and Thr-2025 each carry phosphothreonine. Lys-2027 is covalently cross-linked (Glycyl lysine isopeptide (Lys-Gly) (interchain with G-Cter in SUMO1); alternate). Lys-2027 participates in a covalent cross-link: Glycyl lysine isopeptide (Lys-Gly) (interchain with G-Cter in SUMO2); alternate. Residue Thr-2045 is modified to Phosphothreonine. The interval 2047 to 2112 is disordered; that stretch reads AGANDSVTVE…SPGTPAPVQE (66 aa). The span at 2063–2078 shows a compositional bias: polar residues; the sequence is LESSQAEPVKTPASTK. Residue Ser-2065 is modified to Phosphoserine. Thr-2073 carries the phosphothreonine modification. Residues Ser-2076, Ser-2095, and Ser-2103 each carry the phosphoserine modification. The span at 2088-2101 shows a compositional bias: basic and acidic residues; it reads VDVREDPSILEKKT. 2 positions are modified to phosphothreonine: Thr-2106 and Thr-2122. The tract at residues 2124–2343 is disordered; that stretch reads KQKLDFTGNS…PLSKSSCASQ (220 aa). Basic residues predominate over residues 2135 to 2144; the sequence is GHKRRPRTPK. Thr-2162 bears the Phosphothreonine mark. The segment covering 2180 to 2195 has biased composition (polar residues); sequence LESSQAKPVKTPASTK. The residue at position 2182 (Ser-2182) is a Phosphoserine. Position 2190 is a phosphothreonine (Thr-2190). Ser-2198 is subject to Phosphoserine. Position 2218 is a phosphothreonine (Thr-2218). Ser-2220 bears the Phosphoserine mark. A phosphothreonine mark is found at Thr-2227, Thr-2243, and Thr-2283. Phosphoserine is present on Ser-2303. A phosphothreonine mark is found at Thr-2311 and Thr-2348. A compositionally biased stretch (basic residues) spans 2378–2390; it reads RGKRQQRSCKKRS. Residues 2378–2447 form a disordered region; it reads RGKRQQRSCK…RRQARTGLRK (70 aa). Residues Ser-2390 and Ser-2392 each carry the phosphoserine modification. A Phosphothreonine modification is found at Thr-2405. Phosphoserine is present on residues Ser-2423 and Ser-2425. Lys-2451 participates in a covalent cross-link: Glycyl lysine isopeptide (Lys-Gly) (interchain with G-Cter in SUMO1). 4 positions are modified to phosphoserine: Ser-2464, Ser-2487, Ser-2545, and Ser-2592. Over residues 2538-2547 the composition is skewed to basic and acidic residues; sequence TPKMPDKSPE. Disordered stretches follow at residues 2538–2828 and 2879–3160; these read TPKM…QVSK and HDTS…DAKT. The segment covering 2605–2622 has biased composition (polar residues); it reads VQKQDPSVSLTGRRNQPR. A Phosphoserine modification is found at Ser-2649. Basic and acidic residues-rich tracts occupy residues 2673–2697 and 2704–2714; these read GVKE…KEPV and EEVKKSTKQKI. Lys-2675 participates in a covalent cross-link: Glycyl lysine isopeptide (Lys-Gly) (interchain with G-Cter in SUMO1); alternate. Lys-2675 is covalently cross-linked (Glycyl lysine isopeptide (Lys-Gly) (interchain with G-Cter in SUMO2); alternate). Composition is skewed to polar residues over residues 2764 to 2781 and 2883 to 2892; these read MPCN…QSSP and ILKSTQQQKP. Ser-2768 and Ser-2780 each carry phosphoserine. Basic and acidic residues predominate over residues 2907–2923; that stretch reads ASKEDPKEVLVDTRDHA. Lys-2909 participates in a covalent cross-link: Glycyl lysine isopeptide (Lys-Gly) (interchain with G-Cter in SUMO2). N6-acetyllysine is present on Lys-2928. Residues 2959–2971 show a composition bias toward basic and acidic residues; sequence EATDEKPVPEKKR. Residue 2973–2980 coordinates ATP; the sequence is ASSKRHVS. The residue at position 2980 (Ser-2980) is a Phosphoserine. Residues 3008-3018 show a composition bias toward basic and acidic residues; sequence KTEEMEAKREN. Position 3021 is a phosphothreonine (Thr-3021). Residues 3039-3057 show a composition bias toward basic and acidic residues; sequence PKFDASAENVGIKKNEKTM. Over residues 3058-3067 the composition is skewed to polar residues; that stretch reads KTASQETELQ. Residue Ser-3061 is modified to Phosphoserine. 2 stretches are compositionally biased toward basic and acidic residues: residues 3118-3132 and 3140-3160; these read PQEE…DVRC and VALD…DAKT.

In terms of assembly, interacts with KIF15. Interacts (via the FHA domain) with NIFK. Interacts with PPP1CC. Component of a complex at least composed of ZNF335, HCFC1, CCAR2, EMSY, MKI67, RBBP5, ASH2L and WDR5; the complex is formed as a result of interactions between components of a nuclear receptor-mediated transcription complex and a histone methylation complex. Interacts with ZNF335. Hyperphosphorylated by CDK1 in mitosis; hyperphosphorylatiom prevents undergoing liquid-liquid phase separation. Dephosphorylated by PPP1CC at the onset of anaphase. Dephosphorylation by protein phosphatase 2A (PP2A) and simultaneous exposure of the positively charged patch (CP) during mitotic exit induce the RNA-dependent formation of a liquid-like condensed phase on the chromosome surface. Post-translationally, ubiquitinated by the APC/C complex after neuronal progenitors exit mitosis during brain development, leading to clearance from constitutive heterochromatin. Mainly present in proliferating cells (at protein level).

It localises to the chromosome. The protein localises to the nucleus. Its subcellular location is the nucleolus. Its function is as follows. Protein that associates with the surface of mitotic chromosomes and acts both as a chromosome repellent during early mitosis and chromosome attractant during late mitosis. Required to maintain individual mitotic chromosomes dispersed in the cytoplasm following nuclear envelope disassembly. During early mitosis, relocalizes from nucleoli to the chromosome surface where it forms extended brush structures that cover a substantial fraction of the chromosome surface. The MKI67 brush structure prevents chromosomes from collapsing into a single chromatin mass by forming a steric and electrostatic charge barrier: the protein has a high net electrical charge and acts as a surfactant, dispersing chromosomes and enabling independent chromosome motility. During mitotic anaphase, the MKI67 brush structure collapses and MKI67 switches from a chromosome repellent to a chromosome attractant to promote chromosome clustering and facilitate the exclusion of large cytoplasmic particles from the future nuclear space. Mechanistically, dephosphorylation during mitotic exit and simultaneous exposure of a conserved basic patch induce the RNA-dependent formation of a liquid-like condensed phase on the chromosome surface, promoting coalescence of neighboring chromosome surfaces and clustering of chromosomes. Binds premature ribosomal RNAs during anaphase; promoting liquid-liquid phase separation. Binds DNA, with a preference for supercoiled DNA and AT-rich DNA. Does not contribute to the internal structure of mitotic chromosomes. May play a role in chromatin organization; it is however unclear whether it plays a direct role in chromatin organization or whether it is an indirect consequence of its function in mitotic chromosome. The protein is Proliferation marker protein Ki-67 of Mus musculus (Mouse).